The following is a 403-amino-acid chain: NADH-quinone oxidoreductase subunit D (403 aa).

It belongs to the complex I 49 kDa subunit family. In terms of assembly, NDH-1 is composed of 15 different subunits. Subunits NuoB, C, D, E, F, and G constitute the peripheral sector of the complex.

Its subcellular location is the cell membrane. It carries out the reaction a quinone + NADH + 5 H(+)(in) = a quinol + NAD(+) + 4 H(+)(out). Its function is as follows. NDH-1 shuttles electrons from NADH, via FMN and iron-sulfur (Fe-S) centers, to quinones in the respiratory chain. The immediate electron acceptor for the enzyme in this species is believed to be a menaquinone. Couples the redox reaction to proton translocation (for every two electrons transferred, four hydrogen ions are translocated across the cytoplasmic membrane), and thus conserves the redox energy in a proton gradient. In Deinococcus geothermalis (strain DSM 11300 / CIP 105573 / AG-3a), this protein is NADH-quinone oxidoreductase subunit D.